The chain runs to 197 residues: RNA pyrophosphohydrolase (197 aa).

Positions 6–149 constitute a Nudix hydrolase domain; it reads GYRPNVGIVI…KRDVYRRAMK (144 aa). The Nudix box signature appears at 38–59; that stretch reads GGINEGETPEQAMFRELFEEVG. A disordered region spans residues 170 to 197; the sequence is ETKKAETGKKQPYYHKYAPQNKKGRKRR.

This sequence belongs to the Nudix hydrolase family. RppH subfamily. A divalent metal cation serves as cofactor.

In terms of biological role, accelerates the degradation of transcripts by removing pyrophosphate from the 5'-end of triphosphorylated RNA, leading to a more labile monophosphorylated state that can stimulate subsequent ribonuclease cleavage. The sequence is that of RNA pyrophosphohydrolase from Actinobacillus succinogenes (strain ATCC 55618 / DSM 22257 / CCUG 43843 / 130Z).